A 67-amino-acid chain; its full sequence is MKVLKKMLEWFNRPNSMYIDDGWVEQANKEMQNESEEWMKSMISAEKEKKLERSALKLMRDIYGDKS.

This is an uncharacterized protein from Enterobacteria phage T4 (Bacteriophage T4).